The chain runs to 372 residues: DSC E3 ubiquitin ligase complex subunit 2 (372 aa).

5 helical membrane passes run Val26–Leu46, Ile54–Ile74, Tyr95–Phe115, Thr126–Val146, and Val160–Leu180. The disordered stretch occupies residues Thr246–Tyr314. The segment covering Glu249–Gln268 has biased composition (polar residues). At Ser264 the chain carries Phosphoserine. Phosphothreonine is present on Thr266. A compositionally biased stretch (low complexity) spans Asn269–Ser284. Positions Arg286–Leu305 are enriched in polar residues. Residues Glu332 to Gln368 enclose the UBA domain.

Component of the DSC E3 ubiquitin ligase complex composed of dsc1, dsc2, dsc3 and dsc4.

It localises to the golgi apparatus membrane. It carries out the reaction S-ubiquitinyl-[E2 ubiquitin-conjugating enzyme]-L-cysteine + [acceptor protein]-L-lysine = [E2 ubiquitin-conjugating enzyme]-L-cysteine + N(6)-ubiquitinyl-[acceptor protein]-L-lysine.. It participates in protein modification; protein ubiquitination. Its function is as follows. Component of the DSC E3 ubiquitin ligase complex which is required for the sre1 transcriptional activator proteolytic cleavage to release the soluble transcription factor from the membrane in low oxygen or sterol conditions. The complex also plays an important role in the multivesicular body (MVB) pathway and functions in a post-endoplasmic reticulum pathway for protein degradation. The protein is DSC E3 ubiquitin ligase complex subunit 2 (dsc2) of Schizosaccharomyces pombe (strain 972 / ATCC 24843) (Fission yeast).